A 349-amino-acid chain; its full sequence is NADH-ubiquinone oxidoreductase chain 2 (349 aa).

9 helical membrane passes run 3–23, 66–86, 98–118, 139–159, 178–198, 199–219, 240–260, 274–294, and 319–339; these read PYVL…TFAS, AAAM…EWEI, VMLA…LPEV, FALM…TIGL, ILAY…QFAP, SLTL…FLTL, LAAL…LSGF, GLPL…YFYL, and FTMI…LLPL.

It belongs to the complex I subunit 2 family.

The protein resides in the mitochondrion inner membrane. It catalyses the reaction a ubiquinone + NADH + 5 H(+)(in) = a ubiquinol + NAD(+) + 4 H(+)(out). Functionally, core subunit of the mitochondrial membrane respiratory chain NADH dehydrogenase (Complex I) that is believed to belong to the minimal assembly required for catalysis. Complex I functions in the transfer of electrons from NADH to the respiratory chain. The immediate electron acceptor for the enzyme is believed to be ubiquinone. In Oncorhynchus mykiss (Rainbow trout), this protein is NADH-ubiquinone oxidoreductase chain 2 (MT-ND2).